The primary structure comprises 52 residues: Ribosome biogenesis protein Nop10 (52 aa).

This sequence belongs to the NOP10 family.

Involved in ribosome biogenesis; more specifically in 18S rRNA pseudouridylation and in cleavage of pre-rRNA. This Methanococcus vannielii (strain ATCC 35089 / DSM 1224 / JCM 13029 / OCM 148 / SB) protein is Ribosome biogenesis protein Nop10.